The primary structure comprises 119 residues: Ribosome-binding factor A (119 aa).

Belongs to the RbfA family. As to quaternary structure, monomer. Binds 30S ribosomal subunits, but not 50S ribosomal subunits or 70S ribosomes.

The protein localises to the cytoplasm. Its function is as follows. One of several proteins that assist in the late maturation steps of the functional core of the 30S ribosomal subunit. Associates with free 30S ribosomal subunits (but not with 30S subunits that are part of 70S ribosomes or polysomes). Required for efficient processing of 16S rRNA. May interact with the 5'-terminal helix region of 16S rRNA. This Pelodictyon phaeoclathratiforme (strain DSM 5477 / BU-1) protein is Ribosome-binding factor A.